The sequence spans 190 residues: UPF0340 protein BC_5317 (190 aa).

It belongs to the UPF0340 family.

This Bacillus cereus (strain ATCC 14579 / DSM 31 / CCUG 7414 / JCM 2152 / NBRC 15305 / NCIMB 9373 / NCTC 2599 / NRRL B-3711) protein is UPF0340 protein BC_5317.